Consider the following 364-residue polypeptide: UDP-N-acetylglucosamine--N-acetylmuramyl-(pentapeptide) pyrophosphoryl-undecaprenol N-acetylglucosamine transferase (364 aa).

UDP-N-acetyl-alpha-D-glucosamine is bound by residues 10 to 12, Asn128, Arg170, Ser199, Ile250, and Gln295; that span reads TGG.

This sequence belongs to the glycosyltransferase 28 family. MurG subfamily.

The protein localises to the cell inner membrane. It catalyses the reaction di-trans,octa-cis-undecaprenyl diphospho-N-acetyl-alpha-D-muramoyl-L-alanyl-D-glutamyl-meso-2,6-diaminopimeloyl-D-alanyl-D-alanine + UDP-N-acetyl-alpha-D-glucosamine = di-trans,octa-cis-undecaprenyl diphospho-[N-acetyl-alpha-D-glucosaminyl-(1-&gt;4)]-N-acetyl-alpha-D-muramoyl-L-alanyl-D-glutamyl-meso-2,6-diaminopimeloyl-D-alanyl-D-alanine + UDP + H(+). It functions in the pathway cell wall biogenesis; peptidoglycan biosynthesis. Functionally, cell wall formation. Catalyzes the transfer of a GlcNAc subunit on undecaprenyl-pyrophosphoryl-MurNAc-pentapeptide (lipid intermediate I) to form undecaprenyl-pyrophosphoryl-MurNAc-(pentapeptide)GlcNAc (lipid intermediate II). This is UDP-N-acetylglucosamine--N-acetylmuramyl-(pentapeptide) pyrophosphoryl-undecaprenol N-acetylglucosamine transferase from Chlorobaculum tepidum (strain ATCC 49652 / DSM 12025 / NBRC 103806 / TLS) (Chlorobium tepidum).